A 193-amino-acid chain; its full sequence is Large ribosomal subunit protein uL5 (193 aa).

Belongs to the universal ribosomal protein uL5 family. In terms of assembly, part of the 50S ribosomal subunit; part of the 5S rRNA/L5/L18/L25 subcomplex. Contacts the 5S rRNA and the P site tRNA. Forms a bridge to the 30S subunit in the 70S ribosome.

Its function is as follows. This is one of the proteins that bind and probably mediate the attachment of the 5S RNA into the large ribosomal subunit, where it forms part of the central protuberance. In the 70S ribosome it contacts protein S13 of the 30S subunit (bridge B1b), connecting the 2 subunits; this bridge is implicated in subunit movement. Contacts the P site tRNA; the 5S rRNA and some of its associated proteins might help stabilize positioning of ribosome-bound tRNAs. The protein is Large ribosomal subunit protein uL5 of Pseudarthrobacter chlorophenolicus (strain ATCC 700700 / DSM 12829 / CIP 107037 / JCM 12360 / KCTC 9906 / NCIMB 13794 / A6) (Arthrobacter chlorophenolicus).